The sequence spans 183 residues: ATP-dependent protease subunit HslV (183 aa).

Thr9 is an active-site residue. Ala164, Cys167, and Thr170 together coordinate Na(+).

The protein belongs to the peptidase T1B family. HslV subfamily. A double ring-shaped homohexamer of HslV is capped on each side by a ring-shaped HslU homohexamer. The assembly of the HslU/HslV complex is dependent on binding of ATP.

The protein resides in the cytoplasm. It carries out the reaction ATP-dependent cleavage of peptide bonds with broad specificity.. Its activity is regulated as follows. Allosterically activated by HslU binding. In terms of biological role, protease subunit of a proteasome-like degradation complex believed to be a general protein degrading machinery. The sequence is that of ATP-dependent protease subunit HslV from Hydrogenovibrio crunogenus (strain DSM 25203 / XCL-2) (Thiomicrospira crunogena).